The primary structure comprises 183 residues: Myelin-associated oligodendrocyte basic protein (183 aa).

The disordered stretch occupies residues 68 to 183; sequence TRTSRRAKSP…GSPVKASRFW (116 aa). A compositionally biased stretch (basic residues) spans 69–78; sequence RTSRRAKSPQ. Positions 79–96 are enriched in low complexity; that stretch reads RPKQQPAAPPAVVRAPAK. 4 consecutive repeat copies span residues 97–106, 107–116, 117–126, and 127–136. Residues 97–136 are 4 X 10 AA tandem repeats of P-R-S-P-P-R-S-E-R-Q; that stretch reads PRSPPRSERQPRSPPRSERQPRSPPRSERQPRSPPRSERQ. Residues Ser99 and Ser109 each carry the phosphoserine modification. Residues 101–143 are compositionally biased toward basic and acidic residues; the sequence is PRSERQPRSPPRSERQPRSPPRSERQPRSPPRSERQPRPRPEV. Low complexity predominate over residues 151–164; it reads RPPQKSKQQPRSSP.

Its subcellular location is the cytoplasm. It is found in the perinuclear region. In terms of biological role, may play a role in compacting or stabilizing the myelin sheath, possibly by binding the negatively charged acidic phospholipids of the cytoplasmic membrane. The chain is Myelin-associated oligodendrocyte basic protein (MOBP) from Homo sapiens (Human).